Consider the following 420-residue polypeptide: Glutamyl-tRNA reductase (420 aa).

Substrate contacts are provided by residues 49–52 (TCNR), Ser107, 112–114 (EPQ), and Gln118. Cys50 serves as the catalytic Nucleophile. Residue 187–192 (GAGETI) coordinates NADP(+).

It belongs to the glutamyl-tRNA reductase family. In terms of assembly, homodimer.

The catalysed reaction is (S)-4-amino-5-oxopentanoate + tRNA(Glu) + NADP(+) = L-glutamyl-tRNA(Glu) + NADPH + H(+). It functions in the pathway porphyrin-containing compound metabolism; protoporphyrin-IX biosynthesis; 5-aminolevulinate from L-glutamyl-tRNA(Glu): step 1/2. In terms of biological role, catalyzes the NADPH-dependent reduction of glutamyl-tRNA(Glu) to glutamate 1-semialdehyde (GSA). The chain is Glutamyl-tRNA reductase from Photobacterium profundum (strain SS9).